The following is a 457-amino-acid chain: Argininosuccinate lyase (457 aa).

This sequence belongs to the lyase 1 family. Argininosuccinate lyase subfamily.

The protein localises to the cytoplasm. The catalysed reaction is 2-(N(omega)-L-arginino)succinate = fumarate + L-arginine. It participates in amino-acid biosynthesis; L-arginine biosynthesis; L-arginine from L-ornithine and carbamoyl phosphate: step 3/3. This chain is Argininosuccinate lyase, found in Escherichia coli O157:H7.